The chain runs to 432 residues: Adenylosuccinate synthetase (432 aa).

Residues 13-19 (GDEGKGK) and 41-43 (GHT) each bind GTP. Residue Asp-14 is the Proton acceptor of the active site. Positions 14 and 41 each coordinate Mg(2+). Residues 14 to 17 (DEGK), 39 to 42 (NAGH), Thr-131, Arg-145, Gln-226, Thr-241, and Arg-305 each bind IMP. The active-site Proton donor is His-42. 301 to 307 (SVTGRAR) is a binding site for substrate. GTP contacts are provided by residues Arg-307, 333 to 335 (KLD), and 416 to 418 (STG).

This sequence belongs to the adenylosuccinate synthetase family. In terms of assembly, homodimer. Mg(2+) is required as a cofactor.

The protein resides in the cytoplasm. The enzyme catalyses IMP + L-aspartate + GTP = N(6)-(1,2-dicarboxyethyl)-AMP + GDP + phosphate + 2 H(+). Its pathway is purine metabolism; AMP biosynthesis via de novo pathway; AMP from IMP: step 1/2. In terms of biological role, plays an important role in the de novo pathway of purine nucleotide biosynthesis. Catalyzes the first committed step in the biosynthesis of AMP from IMP. This is Adenylosuccinate synthetase from Neisseria meningitidis serogroup C (strain 053442).